The following is a 561-amino-acid chain: Oligo-1,6-glucosidase (561 aa).

Aspartate 199 (nucleophile) is an active-site residue. Glutamate 256 acts as the Proton donor in catalysis.

It belongs to the glycosyl hydrolase 13 family.

It is found in the cytoplasm. It carries out the reaction Hydrolysis of (1-&gt;6)-alpha-D-glucosidic linkages in some oligosaccharides produced from starch and glycogen by alpha-amylase, and in isomaltose.. The polypeptide is Oligo-1,6-glucosidase (malL) (Halalkalibacterium halodurans (strain ATCC BAA-125 / DSM 18197 / FERM 7344 / JCM 9153 / C-125) (Bacillus halodurans)).